Consider the following 122-residue polypeptide: MIQPQSYLNVADNSGARRLMCIRVLGSSNRKYANIGDMIIAVVKEAVPNMPLKKSEVVRAVIVRTCKGIKRNNGMILRFDDNAAVVVNQEGNPRGTRVFGPVARELRDFNFTKIVSLAPEVL.

It belongs to the universal ribosomal protein uL14 family. In terms of assembly, part of the 50S ribosomal subunit.

It is found in the plastid. The protein resides in the chloroplast. Its function is as follows. Binds to 23S rRNA. This is Large ribosomal subunit protein uL14c from Staurastrum punctulatum (Green alga).